A 510-amino-acid polypeptide reads, in one-letter code: NAD(P)H-quinone oxidoreductase subunit 2 A, chloroplastic (510 aa).

A run of 13 helical transmembrane segments spans residues 24-44, 59-79, 99-119, 124-144, 149-169, 183-203, 229-249, 295-315, 323-343, 347-367, 395-415, 418-438, and 484-504; these read LLLF…GLIL, WFYF…LFRW, IFQF…VEYI, MAIT…MFLC, LITI…LSGY, YLLM…WLYG, ISIA…PAPF, WHLL…LIAI, MLAY…IVGD, GYAS…GTFA, ALSS…AGFF, LHLF…IGLL, and MIVC…IIAI.

This sequence belongs to the complex I subunit 2 family. In terms of assembly, NDH is composed of at least 16 different subunits, 5 of which are encoded in the nucleus.

It is found in the plastid. The protein resides in the chloroplast thylakoid membrane. It catalyses the reaction a plastoquinone + NADH + (n+1) H(+)(in) = a plastoquinol + NAD(+) + n H(+)(out). It carries out the reaction a plastoquinone + NADPH + (n+1) H(+)(in) = a plastoquinol + NADP(+) + n H(+)(out). In terms of biological role, NDH shuttles electrons from NAD(P)H:plastoquinone, via FMN and iron-sulfur (Fe-S) centers, to quinones in the photosynthetic chain and possibly in a chloroplast respiratory chain. The immediate electron acceptor for the enzyme in this species is believed to be plastoquinone. Couples the redox reaction to proton translocation, and thus conserves the redox energy in a proton gradient. The protein is NAD(P)H-quinone oxidoreductase subunit 2 A, chloroplastic of Amborella trichopoda.